The following is a 478-amino-acid chain: Ribulose bisphosphate carboxylase large chain (478 aa).

A propeptide spanning residues 1–2 (MS) is cleaved from the precursor. The residue at position 3 (P3) is an N-acetylproline. The residue at position 14 (K14) is an N6,N6,N6-trimethyllysine. Positions 123 and 173 each coordinate substrate. K175 functions as the Proton acceptor in the catalytic mechanism. K177 provides a ligand contact to substrate. The Mg(2+) site is built by K201, D203, and E204. N6-carboxylysine is present on K201. The Proton acceptor role is filled by H294. Substrate is bound by residues R295, H327, and S379.

This sequence belongs to the RuBisCO large chain family. Type I subfamily. In terms of assembly, heterohexadecamer of 8 large chains and 8 small chains; disulfide-linked. The disulfide link is formed within the large subunit homodimers. Mg(2+) is required as a cofactor. In terms of processing, the disulfide bond which can form in the large chain dimeric partners within the hexadecamer appears to be associated with oxidative stress and protein turnover.

Its subcellular location is the plastid. The protein resides in the chloroplast. The enzyme catalyses 2 (2R)-3-phosphoglycerate + 2 H(+) = D-ribulose 1,5-bisphosphate + CO2 + H2O. It catalyses the reaction D-ribulose 1,5-bisphosphate + O2 = 2-phosphoglycolate + (2R)-3-phosphoglycerate + 2 H(+). In terms of biological role, ruBisCO catalyzes two reactions: the carboxylation of D-ribulose 1,5-bisphosphate, the primary event in carbon dioxide fixation, as well as the oxidative fragmentation of the pentose substrate in the photorespiration process. Both reactions occur simultaneously and in competition at the same active site. This is Ribulose bisphosphate carboxylase large chain from Drimys granadensis.